Reading from the N-terminus, the 491-residue chain is Aspartyl/glutamyl-tRNA(Asn/Gln) amidotransferase subunit B (491 aa).

Belongs to the GatB/GatE family. GatB subfamily. In terms of assembly, heterotrimer of A, B and C subunits.

The catalysed reaction is L-glutamyl-tRNA(Gln) + L-glutamine + ATP + H2O = L-glutaminyl-tRNA(Gln) + L-glutamate + ADP + phosphate + H(+). The enzyme catalyses L-aspartyl-tRNA(Asn) + L-glutamine + ATP + H2O = L-asparaginyl-tRNA(Asn) + L-glutamate + ADP + phosphate + 2 H(+). In terms of biological role, allows the formation of correctly charged Asn-tRNA(Asn) or Gln-tRNA(Gln) through the transamidation of misacylated Asp-tRNA(Asn) or Glu-tRNA(Gln) in organisms which lack either or both of asparaginyl-tRNA or glutaminyl-tRNA synthetases. The reaction takes place in the presence of glutamine and ATP through an activated phospho-Asp-tRNA(Asn) or phospho-Glu-tRNA(Gln). The chain is Aspartyl/glutamyl-tRNA(Asn/Gln) amidotransferase subunit B from Burkholderia cenocepacia (strain HI2424).